The primary structure comprises 123 residues: Small ribosomal subunit protein uS13 (123 aa).

A disordered region spans residues 95 to 123 (GLPVRGQKTKTNARTRKGPKRTVGRKKKK). Residues 101 to 123 (QKTKTNARTRKGPKRTVGRKKKK) show a composition bias toward basic residues.

The protein belongs to the universal ribosomal protein uS13 family. In terms of assembly, part of the 30S ribosomal subunit. Forms a loose heterodimer with protein S19. Forms two bridges to the 50S subunit in the 70S ribosome.

Functionally, located at the top of the head of the 30S subunit, it contacts several helices of the 16S rRNA. In the 70S ribosome it contacts the 23S rRNA (bridge B1a) and protein L5 of the 50S subunit (bridge B1b), connecting the 2 subunits; these bridges are implicated in subunit movement. Contacts the tRNAs in the A and P-sites. This chain is Small ribosomal subunit protein uS13, found in Alkaliphilus metalliredigens (strain QYMF).